The primary structure comprises 90 residues: MLAKLFGLSKKQQSASVAKERLQIIVAHQRSELHPRSSKISSHLLAELKDEIIEVVKKYVALSEENIRDIDLKVEDSSKNSTIEVNIPFN.

It belongs to the MinE family.

Prevents the cell division inhibition by proteins MinC and MinD at internal division sites while permitting inhibition at polar sites. This ensures cell division at the proper site by restricting the formation of a division septum at the midpoint of the long axis of the cell. The protein is Cell division topological specificity factor of Francisella tularensis subsp. tularensis (strain FSC 198).